We begin with the raw amino-acid sequence, 318 residues long: NADH-ubiquinone oxidoreductase chain 1 (318 aa).

Transmembrane regions (helical) follow at residues 2–22 (FLINVLTVTLPILPAVAFLTL), 69–89 (FLFTVAPILALTLALTVWAPL), 102–122 (LLFILAMSSLMVYSILWSGWA), 146–166 (MTTITLSMVLMNGSFTLTAFA), 171–191 (HLWLIFPMWPLMMMWFTSTLA), 222–242 (LFFMAEYANIIMMNALTVILF), 253–273 (EISTINFVMKTIILTICFLWV), and 294–314 (LPLTLALCMWHISILISLACI).

Belongs to the complex I subunit 1 family. As to quaternary structure, core subunit of respiratory chain NADH dehydrogenase (Complex I) which is composed of 45 different subunits.

It is found in the mitochondrion inner membrane. The catalysed reaction is a ubiquinone + NADH + 5 H(+)(in) = a ubiquinol + NAD(+) + 4 H(+)(out). Its function is as follows. Core subunit of the mitochondrial membrane respiratory chain NADH dehydrogenase (Complex I) which catalyzes electron transfer from NADH through the respiratory chain, using ubiquinone as an electron acceptor. Essential for the catalytic activity and assembly of complex I. The protein is NADH-ubiquinone oxidoreductase chain 1 (MT-ND1) of Elephas maximus (Indian elephant).